Here is a 428-residue protein sequence, read N- to C-terminus: Flotillin-2 (428 aa).

G2 carries the N-myristoyl glycine lipid modification. C4 carries S-palmitoyl cysteine; by ZDHHC5 lipidation. C19 carries S-palmitoyl cysteine lipidation. C20 is lipidated: S-palmitoyl cysteine; by ZDHHC5. Phosphoserine is present on S405.

It belongs to the band 7/mec-2 family. Flotillin subfamily. As to quaternary structure, heterooligomeric complex of flotillin-1 and flotillin-2 and caveolin-1 and caveolin-2. Interacts with ECPAS. In terms of processing, ZDHHC5-catalyzed palmitoylation predominantly occurs at Cys-4. ZDHHC5-catalyzed palmitoylation may be required for the formation of higher-order complexes and for neurite outgrowth in cultured neural stem cells. As to expression, in skin, expressed in epidermis and epidermal appendages but not in dermis. Expressed in all layers of the epidermis except the basal layer. In hair follicles, expressed in the suprabasal layer but not the basal layer. Also expressed in melanoma and carcinoma cell lines, fibroblasts and foreskin melanocytes.

It localises to the cell membrane. It is found in the membrane. The protein resides in the caveola. Its subcellular location is the endosome. In terms of biological role, may act as a scaffolding protein within caveolar membranes, functionally participating in formation of caveolae or caveolae-like vesicles. May be involved in epidermal cell adhesion and epidermal structure and function. In Homo sapiens (Human), this protein is Flotillin-2 (FLOT2).